The primary structure comprises 134 residues: Seminal plasma protein PDC-109 (134 aa).

Positions 1–25 (MALQLGLFLIWAGVSVFLQLDPVNG) are cleaved as a signal peptide. A glycan (O-linked (GalNAc...) threonine) is linked at threonine 36. 2 Fibronectin type-II domains span residues 44-88 (PEDE…YCAQ) and 89-134 (RDYA…WKYC). Intrachain disulfides connect cysteine 49–cysteine 73, cysteine 63–cysteine 86, cysteine 94–cysteine 119, and cysteine 108–cysteine 134.

This sequence belongs to the seminal plasma protein family. In terms of assembly, homodimer. In terms of processing, O-linked glycan consists of Gal-GalNAc disaccharide which is modified with a sialic acid residue (macro- and/or microheterogeneity account for differences between BSP-A1 and BSP-A2). In terms of tissue distribution, major component of seminal plasma.

The protein localises to the secreted. Could enhance the fertilizing capacity of bull spermatozoa upon interaction with heparin-like glycosaminoglycans present in the female genital tract. Exhibits both simulatory and inhibitory actions on the release of pituitary gonadotropins. This chain is Seminal plasma protein PDC-109, found in Bos taurus (Bovine).